Here is a 351-residue protein sequence, read N- to C-terminus: Anthranilate phosphoribosyltransferase (351 aa).

Residues G92, 95–96 (GD), T100, 102–105 (NIST), 120–128 (KHGNRAASS), and S132 contribute to the 5-phospho-alpha-D-ribose 1-diphosphate site. G92 provides a ligand contact to anthranilate. S104 is a Mg(2+) binding site. N123 is an anthranilate binding site. Residue R178 participates in anthranilate binding. The Mg(2+) site is built by D236 and E237.

This sequence belongs to the anthranilate phosphoribosyltransferase family. Homodimer. Mg(2+) serves as cofactor.

The enzyme catalyses N-(5-phospho-beta-D-ribosyl)anthranilate + diphosphate = 5-phospho-alpha-D-ribose 1-diphosphate + anthranilate. Its pathway is amino-acid biosynthesis; L-tryptophan biosynthesis; L-tryptophan from chorismate: step 2/5. Catalyzes the transfer of the phosphoribosyl group of 5-phosphorylribose-1-pyrophosphate (PRPP) to anthranilate to yield N-(5'-phosphoribosyl)-anthranilate (PRA). The sequence is that of Anthranilate phosphoribosyltransferase from Deinococcus geothermalis (strain DSM 11300 / CIP 105573 / AG-3a).